We begin with the raw amino-acid sequence, 274 residues long: Large ribosomal subunit protein uL2cz/uL2cy (274 aa).

Disordered stretches follow at residues 1–22 (MAIH…DSQV) and 225–274 (PVDH…RRSK).

The protein belongs to the universal ribosomal protein uL2 family. As to quaternary structure, part of the 50S ribosomal subunit.

It localises to the plastid. It is found in the chloroplast. The protein is Large ribosomal subunit protein uL2cz/uL2cy (rpl2-A) of Nasturtium officinale (Watercress).